Reading from the N-terminus, the 166-residue chain is Transcriptional repressor NrdR (166 aa).

A zinc finger lies at 3-34 (CPFCRNPDSRVVDSRMADDGSSIRRRRQCPEC). The ATP-cone domain maps to 46–136 (LSVIKRSGVG…VYQAFESLED (91 aa)).

This sequence belongs to the NrdR family. The cofactor is Zn(2+).

Its function is as follows. Negatively regulates transcription of bacterial ribonucleotide reductase nrd genes and operons by binding to NrdR-boxes. This Paenarthrobacter aurescens (strain TC1) protein is Transcriptional repressor NrdR.